Here is a 508-residue protein sequence, read N- to C-terminus: UDP-N-acetylmuramoyl-L-alanyl-D-glutamate--2,6-diaminopimelate ligase (508 aa).

Residue Ser29 participates in UDP-N-acetyl-alpha-D-muramoyl-L-alanyl-D-glutamate binding. 112–118 lines the ATP pocket; sequence GTNGKTS. Residues 159–160, Ser186, Gln192, and Arg194 each bind UDP-N-acetyl-alpha-D-muramoyl-L-alanyl-D-glutamate; that span reads TT. Position 226 is an N6-carboxylysine (Lys226). Residues Arg398, 421–424, Gly473, and Glu477 contribute to the meso-2,6-diaminopimelate site; that span reads DNPR. Residues 421–424 carry the Meso-diaminopimelate recognition motif motif; it reads DNPR.

This sequence belongs to the MurCDEF family. MurE subfamily. The cofactor is Mg(2+). In terms of processing, carboxylation is probably crucial for Mg(2+) binding and, consequently, for the gamma-phosphate positioning of ATP.

It is found in the cytoplasm. The enzyme catalyses UDP-N-acetyl-alpha-D-muramoyl-L-alanyl-D-glutamate + meso-2,6-diaminopimelate + ATP = UDP-N-acetyl-alpha-D-muramoyl-L-alanyl-gamma-D-glutamyl-meso-2,6-diaminopimelate + ADP + phosphate + H(+). It participates in cell wall biogenesis; peptidoglycan biosynthesis. Catalyzes the addition of meso-diaminopimelic acid to the nucleotide precursor UDP-N-acetylmuramoyl-L-alanyl-D-glutamate (UMAG) in the biosynthesis of bacterial cell-wall peptidoglycan. The polypeptide is UDP-N-acetylmuramoyl-L-alanyl-D-glutamate--2,6-diaminopimelate ligase (Janthinobacterium sp. (strain Marseille) (Minibacterium massiliensis)).